The chain runs to 429 residues: uncharacterized protein (429 aa).

A compositionally biased stretch (basic and acidic residues) spans methionine 1 to glutamine 12. Disordered regions lie at residues methionine 1–alanine 63, arginine 257–methionine 306, and tyrosine 320–glutamate 429. Residues glutamate 328–valine 362 show a composition bias toward acidic residues. Residues lysine 369–serine 378 show a composition bias toward basic and acidic residues.

This sequence belongs to the LEO1 family.

It is found in the nucleus. This is an uncharacterized protein from Schizosaccharomyces pombe (strain 972 / ATCC 24843) (Fission yeast).